Here is a 331-residue protein sequence, read N- to C-terminus: Glyceraldehyde-3-phosphate dehydrogenase, cytosolic (331 aa).

Residues 12–13, D34, and R78 contribute to the NAD(+) site; that span reads RI. Residues 149–151, T180, 209–210, and R232 contribute to the D-glyceraldehyde 3-phosphate site; these read SCT and TG. The active-site Nucleophile is the C150. Residue N314 participates in NAD(+) binding.

This sequence belongs to the glyceraldehyde-3-phosphate dehydrogenase family. Homotetramer.

Its subcellular location is the cytoplasm. It catalyses the reaction D-glyceraldehyde 3-phosphate + phosphate + NAD(+) = (2R)-3-phospho-glyceroyl phosphate + NADH + H(+). The protein operates within carbohydrate degradation; glycolysis; pyruvate from D-glyceraldehyde 3-phosphate: step 1/5. In Trypanosoma brucei brucei, this protein is Glyceraldehyde-3-phosphate dehydrogenase, cytosolic.